Consider the following 392-residue polypeptide: NADH dehydrogenase-like protein YjlD (392 aa).

It belongs to the NADH dehydrogenase family. Requires FAD as cofactor.

This Bacillus subtilis (strain 168) protein is NADH dehydrogenase-like protein YjlD (yjlD).